A 230-amino-acid chain; its full sequence is uncharacterized protein (230 aa).

A helical transmembrane segment spans residues 19 to 39 (GIFQVLLQLVLAMMTVWDFAG). N-linked (GlcNAc...) asparagine; by host glycosylation is present at Asn41. A helical membrane pass occupies residues 55 to 75 (SFLLVLYTGLKQILEYMFSIC). Asn86, Asn157, Asn168, and Asn182 each carry an N-linked (GlcNAc...) asparagine; by host glycan. Residues 172–196 (TNLHKYQNDENDTEEDSEDIEKNSD) adopt a coiled-coil conformation. Residues 178-205 (QNDENDTEEDSEDIEKNSDPKENSDIDS) form a disordered region. Acidic residues predominate over residues 180–190 (DENDTEEDSED). The span at 191–201 (IEKNSDPKENS) shows a compositional bias: basic and acidic residues.

It is found in the membrane. This is an uncharacterized protein from Acanthamoeba polyphaga mimivirus (APMV).